A 353-amino-acid chain; its full sequence is MCKSRVHSFLQALPKVEQHLHIEGTLEPELLFTLAEKNGIELPNDPVYESADKLRERYGRFTSLDDFLHYYYLGMSVLITENDFETLAYQYFQRAAGENVRHAEIFFDPQAHIARGVSYDTVVAGLVAAKHRAQKELGITVELIVCILRHLPVPESHALVDTLLDRGHFNDGTLTGFGMVSSEKAFPPELFTDVYARVAKTGTHLTTHAGEEAPPSFITASLEHLKVSRIDHGLAAAQDPELLKKLAANRTLLTFCPWSNVALCNLPELADAPVREFLDAGVLFSVNSDDPAYFGAYVQEVYCRVQDTFNLSVKDWAWIVRGAVEESWCSEERKKEILKEMEQVLEKYKDLDA.

Zn(2+)-binding residues include histidine 19, histidine 21, and histidine 208. The active-site Proton donor is glutamate 211. Aspartate 289 provides a ligand contact to Zn(2+). Substrate is bound at residue aspartate 290.

Belongs to the metallo-dependent hydrolases superfamily. Adenosine and AMP deaminases family. Adenine deaminase type 2 subfamily. Requires Zn(2+) as cofactor.

Its subcellular location is the cytoplasm. It localises to the nucleus. The enzyme catalyses adenine + H2O + H(+) = hypoxanthine + NH4(+). Functionally, catalyzes the hydrolytic deamination of adenine to hypoxanthine. Plays an important role in the purine salvage pathway and in nitrogen catabolism. The chain is Adenine deaminase from Gibberella zeae (strain ATCC MYA-4620 / CBS 123657 / FGSC 9075 / NRRL 31084 / PH-1) (Wheat head blight fungus).